A 294-amino-acid polypeptide reads, in one-letter code: 4-hydroxy-tetrahydrodipicolinate synthase (294 aa).

Position 45 (T45) interacts with pyruvate. Y133 serves as the catalytic Proton donor/acceptor. The Schiff-base intermediate with substrate role is filled by K161. Pyruvate is bound at residue I203.

Belongs to the DapA family. Homotetramer; dimer of dimers.

The protein localises to the cytoplasm. It catalyses the reaction L-aspartate 4-semialdehyde + pyruvate = (2S,4S)-4-hydroxy-2,3,4,5-tetrahydrodipicolinate + H2O + H(+). The protein operates within amino-acid biosynthesis; L-lysine biosynthesis via DAP pathway; (S)-tetrahydrodipicolinate from L-aspartate: step 3/4. In terms of biological role, catalyzes the condensation of (S)-aspartate-beta-semialdehyde [(S)-ASA] and pyruvate to 4-hydroxy-tetrahydrodipicolinate (HTPA). The polypeptide is 4-hydroxy-tetrahydrodipicolinate synthase (Buchnera aphidicola subsp. Acyrthosiphon pisum (strain APS) (Acyrthosiphon pisum symbiotic bacterium)).